A 549-amino-acid chain; its full sequence is Glucose-6-phosphate isomerase (549 aa).

Residue E355 is the Proton donor of the active site. Residues H386 and K514 contribute to the active site.

It belongs to the GPI family.

The protein localises to the cytoplasm. It carries out the reaction alpha-D-glucose 6-phosphate = beta-D-fructose 6-phosphate. It participates in carbohydrate biosynthesis; gluconeogenesis. It functions in the pathway carbohydrate degradation; glycolysis; D-glyceraldehyde 3-phosphate and glycerone phosphate from D-glucose: step 2/4. Catalyzes the reversible isomerization of glucose-6-phosphate to fructose-6-phosphate. The protein is Glucose-6-phosphate isomerase of Salmonella paratyphi C (strain RKS4594).